An 822-amino-acid polypeptide reads, in one-letter code: Valine--tRNA ligase (822 aa).

The 'HIGH' region motif lies at 41–51; sequence PNVTGQLHLGH. The 'KMSKS' region signature appears at 511–515; sequence KMSKS. Lys-514 is a binding site for ATP. Residues 765-822 are a coiled coil; it reads EQKGRELKEIQFLKSEILRAEKILTNKGFLEKAPREKIDLERTKLEKLKEKLAFYEKK.

It belongs to the class-I aminoacyl-tRNA synthetase family. ValS type 1 subfamily. Monomer.

The protein localises to the cytoplasm. It carries out the reaction tRNA(Val) + L-valine + ATP = L-valyl-tRNA(Val) + AMP + diphosphate. Functionally, catalyzes the attachment of valine to tRNA(Val). As ValRS can inadvertently accommodate and process structurally similar amino acids such as threonine, to avoid such errors, it has a 'posttransfer' editing activity that hydrolyzes mischarged Thr-tRNA(Val) in a tRNA-dependent manner. The chain is Valine--tRNA ligase from Mesomycoplasma hyopneumoniae (strain 232) (Mycoplasma hyopneumoniae).